Reading from the N-terminus, the 232-residue chain is Enterobactin synthase component D (232 aa).

The Mg(2+) site is built by aspartate 106, glutamate 108, and glutamate 150.

This sequence belongs to the P-Pant transferase superfamily. EntD family. As to quaternary structure, entB, EntD, EntE, and EntF form a multienzyme complex called enterobactin synthase. Mg(2+) serves as cofactor.

The protein resides in the membrane. It carries out the reaction apo-[aryl-carrier protein] + CoA = holo-[aryl-carrier protein] + adenosine 3',5'-bisphosphate + H(+). The enzyme catalyses apo-[peptidyl-carrier protein] + CoA = holo-[peptidyl-carrier protein] + adenosine 3',5'-bisphosphate + H(+). It participates in siderophore biosynthesis; enterobactin biosynthesis. Functionally, involved in the biosynthesis of the siderophore enterobactin (enterochelin), which is a macrocyclic trimeric lactone of N-(2,3-dihydroxybenzoyl)-serine. The serine trilactone serves as a scaffolding for the three catechol functionalities that provide hexadentate coordination for the tightly ligated iron(2+) atoms. Plays an essential role in the assembly of the enterobactin by catalyzing the transfer of the 4'-phosphopantetheine (Ppant) moiety from coenzyme A to the apo-domains of both EntB (ArCP domain) and EntF (PCP domain) to yield their holo-forms which make them competent for the activation of 2,3-dihydroxybenzoate (DHB) and L-serine, respectively. The protein is Enterobactin synthase component D of Salmonella austin.